The chain runs to 140 residues: Large ribosomal subunit protein bL17 (140 aa).

The protein belongs to the bacterial ribosomal protein bL17 family. In terms of assembly, part of the 50S ribosomal subunit. Contacts protein L32.

The chain is Large ribosomal subunit protein bL17 from Methylobacterium nodulans (strain LMG 21967 / CNCM I-2342 / ORS 2060).